Consider the following 240-residue polypeptide: Probable transcriptional regulatory protein YrbC (240 aa).

Belongs to the TACO1 family.

It localises to the cytoplasm. The sequence is that of Probable transcriptional regulatory protein YrbC (yrbC) from Bacillus subtilis (strain 168).